The primary structure comprises 354 residues: Photosystem II D2 protein (354 aa).

Thr2 bears the N-acetylthreonine mark. Phosphothreonine is present on Thr2. Residues 42–62 form a helical membrane-spanning segment; sequence CAYFALGGWFTGTTFVTSWYT. His119 serves as a coordination point for chlorophyll a. A helical membrane pass occupies residues 126–142; that stretch reads GFMLRQFELARSVQLRP. Pheophytin a contacts are provided by Gln131 and Asn144. The chain crosses the membrane as a helical span at residues 154–167; sequence VFVSVFLIYPLGQS. His199 contacts chlorophyll a. The helical transmembrane segment at 209–229 threads the bilayer; sequence AALLCAIHGATVENTLFEDGD. A plastoquinone-binding residues include His216 and Phe263. A Fe cation-binding site is contributed by His216. A Fe cation-binding site is contributed by His270. Residues 280–296 traverse the membrane as a helical segment; the sequence is GLWMSALGVVGLALNLR.

Belongs to the reaction center PufL/M/PsbA/D family. As to quaternary structure, PSII is composed of 1 copy each of membrane proteins PsbA, PsbB, PsbC, PsbD, PsbE, PsbF, PsbH, PsbI, PsbJ, PsbK, PsbL, PsbM, PsbT, PsbX, PsbY, PsbZ, Psb30/Ycf12, at least 3 peripheral proteins of the oxygen-evolving complex and a large number of cofactors. It forms dimeric complexes. The D1/D2 heterodimer binds P680, chlorophylls that are the primary electron donor of PSII, and subsequent electron acceptors. It shares a non-heme iron and each subunit binds pheophytin, quinone, additional chlorophylls, carotenoids and lipids. There is also a Cl(-1) ion associated with D1 and D2, which is required for oxygen evolution. The PSII complex binds additional chlorophylls, carotenoids and specific lipids. serves as cofactor.

The protein localises to the plastid. It is found in the chloroplast thylakoid membrane. It carries out the reaction 2 a plastoquinone + 4 hnu + 2 H2O = 2 a plastoquinol + O2. Its function is as follows. Photosystem II (PSII) is a light-driven water:plastoquinone oxidoreductase that uses light energy to abstract electrons from H(2)O, generating O(2) and a proton gradient subsequently used for ATP formation. It consists of a core antenna complex that captures photons, and an electron transfer chain that converts photonic excitation into a charge separation. The D1/D2 (PsbA/PsbD) reaction center heterodimer binds P680, the primary electron donor of PSII as well as several subsequent electron acceptors. D2 is needed for assembly of a stable PSII complex. This is Photosystem II D2 protein from Piper cenocladum (Ant piper).